The primary structure comprises 643 residues: Beta-1,3-galactosyltransferase GALT1 (643 aa).

Over 1 to 6 the chain is Cytoplasmic; sequence MKRFYG. Residues 7 to 23 traverse the membrane as a helical; Signal-anchor for type II membrane protein segment; that stretch reads GLLVVSMCMFLTVYRYV. Residues 24–643 lie on the Lumenal side of the membrane; it reads DLNTPVEKPY…TKRSLCCREW (620 aa). Residues Asn45, Asn87, Asn144, Asn162, Asn277, Asn287, and Asn508 are each glycosylated (N-linked (GlcNAc...) asparagine). Positions 171-364 constitute a Galectin domain; the sequence is LKLQIPCGLT…DFRLISILAS (194 aa).

Belongs to the glycosyltransferase 31 family. Interacts with GMII. Mn(2+) is required as a cofactor. Expressed in stems and siliques.

Its subcellular location is the golgi apparatus membrane. It functions in the pathway protein modification; protein glycosylation. Beta-1,3-galactosyltransferase that transfers galactose from UDP-galactose to substrates with a terminal beta-N-acetylglucosamine (beta-GlcNAc) residue. Involved in the biosynthesis of N-glycans containing Lewis a structures (with the combination of FUT13). This chain is Beta-1,3-galactosyltransferase GALT1, found in Arabidopsis thaliana (Mouse-ear cress).